Reading from the N-terminus, the 208-residue chain is Probable GTP-binding protein EngB (208 aa).

The EngB-type G domain occupies Gly22–Glu195. Residues Gly30 to Ser37, Gly57 to Thr61, Asp75 to Gly78, Thr142 to Asp145, and Ile174 to Ser176 each bind GTP. Ser37 and Thr59 together coordinate Mg(2+).

This sequence belongs to the TRAFAC class TrmE-Era-EngA-EngB-Septin-like GTPase superfamily. EngB GTPase family. Mg(2+) is required as a cofactor.

In terms of biological role, necessary for normal cell division and for the maintenance of normal septation. The sequence is that of Probable GTP-binding protein EngB from Alkaliphilus metalliredigens (strain QYMF).